The sequence spans 207 residues: Small ribosomal subunit protein uS4 (207 aa).

The segment at 31-54 (KCKLDTKPGQHGRTSGSRTSDYGN) is disordered. The span at 42–53 (GRTSGSRTSDYG) shows a compositional bias: polar residues. Residues 97 to 158 (SRLDNVVYRM…KAKKQARITE (62 aa)) enclose the S4 RNA-binding domain.

This sequence belongs to the universal ribosomal protein uS4 family. Part of the 30S ribosomal subunit. Contacts protein S5. The interaction surface between S4 and S5 is involved in control of translational fidelity.

Its function is as follows. One of the primary rRNA binding proteins, it binds directly to 16S rRNA where it nucleates assembly of the body of the 30S subunit. In terms of biological role, with S5 and S12 plays an important role in translational accuracy. This chain is Small ribosomal subunit protein uS4, found in Polynucleobacter asymbioticus (strain DSM 18221 / CIP 109841 / QLW-P1DMWA-1) (Polynucleobacter necessarius subsp. asymbioticus).